Here is a 142-residue protein sequence, read N- to C-terminus: MKIAIGADTDGFELKEHLKNYLKSKGIEVIDKTPEKGINLVKSASLVAQAVMNKEADRAVAIDEYGAGSFMVGAKHKGIICAEVSDEHSAKMTSQHNSANMLAIGAGIVGKRLAEGMLDAYIAEKYAGGRHQIRVDMLNKML.

Belongs to the LacAB/RpiB family. As to quaternary structure, heteromultimeric protein consisting of LacA and LacB.

The catalysed reaction is aldehydo-D-galactose 6-phosphate = keto-D-tagatose 6-phosphate. Its pathway is carbohydrate metabolism; D-galactose 6-phosphate degradation; D-tagatose 6-phosphate from D-galactose 6-phosphate: step 1/1. The polypeptide is Galactose-6-phosphate isomerase subunit LacA (Clostridium acetobutylicum (strain ATCC 824 / DSM 792 / JCM 1419 / IAM 19013 / LMG 5710 / NBRC 13948 / NRRL B-527 / VKM B-1787 / 2291 / W)).